The primary structure comprises 350 residues: Phosphotriesterase-related protein (350 aa).

Residues H22, H24, E169, H201, H230, and D298 each contribute to the a divalent metal cation site.

The protein belongs to the metallo-dependent hydrolases superfamily. Phosphotriesterase family. Requires a divalent metal cation as cofactor.

The sequence is that of Phosphotriesterase-related protein from Drosophila pseudoobscura pseudoobscura (Fruit fly).